Consider the following 158-residue polypeptide: Small ribosomal subunit protein uS9 (158 aa).

It belongs to the universal ribosomal protein uS9 family.

The sequence is that of Small ribosomal subunit protein uS9 from Brucella melitensis biotype 2 (strain ATCC 23457).